Here is a 126-residue protein sequence, read N- to C-terminus: MRHRKSGRQLNRNSSHRKAMFSNMACSLVRHEIIKTTVPKAKELRRVVEPLITLAKTDSVANRRLAFARTRDNEVVAKLFTELGPRFAQRAGGYTRILKCGFRTGDKAPMAYIELVDRPEVEAAAE.

This sequence belongs to the bacterial ribosomal protein bL17 family. Part of the 50S ribosomal subunit. Contacts protein L32.

The polypeptide is Large ribosomal subunit protein bL17 (Aliivibrio salmonicida (strain LFI1238) (Vibrio salmonicida (strain LFI1238))).